The chain runs to 119 residues: Holo-[acyl-carrier-protein] synthase (119 aa).

Mg(2+)-binding residues include Asp8 and Glu60.

It belongs to the P-Pant transferase superfamily. AcpS family. Mg(2+) serves as cofactor.

The protein resides in the cytoplasm. The catalysed reaction is apo-[ACP] + CoA = holo-[ACP] + adenosine 3',5'-bisphosphate + H(+). Its function is as follows. Transfers the 4'-phosphopantetheine moiety from coenzyme A to a Ser of acyl-carrier-protein. The sequence is that of Holo-[acyl-carrier-protein] synthase from Mycoplasma pneumoniae (strain ATCC 29342 / M129 / Subtype 1) (Mycoplasmoides pneumoniae).